A 120-amino-acid polypeptide reads, in one-letter code: Large ribosomal subunit protein bL17 (120 aa).

This sequence belongs to the bacterial ribosomal protein bL17 family. In terms of assembly, part of the 50S ribosomal subunit. Contacts protein L32.

This is Large ribosomal subunit protein bL17 from Geobacillus thermodenitrificans (strain NG80-2).